The following is a 476-amino-acid chain: Aspartyl/glutamyl-tRNA(Asn/Gln) amidotransferase subunit B (476 aa).

The protein belongs to the GatB/GatE family. GatB subfamily. As to quaternary structure, heterotrimer of A, B and C subunits.

It catalyses the reaction L-glutamyl-tRNA(Gln) + L-glutamine + ATP + H2O = L-glutaminyl-tRNA(Gln) + L-glutamate + ADP + phosphate + H(+). The catalysed reaction is L-aspartyl-tRNA(Asn) + L-glutamine + ATP + H2O = L-asparaginyl-tRNA(Asn) + L-glutamate + ADP + phosphate + 2 H(+). Its function is as follows. Allows the formation of correctly charged Asn-tRNA(Asn) or Gln-tRNA(Gln) through the transamidation of misacylated Asp-tRNA(Asn) or Glu-tRNA(Gln) in organisms which lack either or both of asparaginyl-tRNA or glutaminyl-tRNA synthetases. The reaction takes place in the presence of glutamine and ATP through an activated phospho-Asp-tRNA(Asn) or phospho-Glu-tRNA(Gln). This Vesicomyosocius okutanii subsp. Calyptogena okutanii (strain HA) protein is Aspartyl/glutamyl-tRNA(Asn/Gln) amidotransferase subunit B.